The chain runs to 467 residues: DNA repair protein RadA (467 aa).

The C4-type zinc-finger motif lies at 10–27 (CQNCGAVHSRWAGKCDSC). ATP is bound at residue 98–105 (GDPGIGKS). A RadA KNRFG motif motif is present at residues 260–264 (KNRFG). The lon-protease-like stretch occupies residues 359 to 467 (DVYLNVAGGY…RIAASGAGKK (109 aa)).

Belongs to the RecA family. RadA subfamily.

Functionally, DNA-dependent ATPase involved in processing of recombination intermediates, plays a role in repairing DNA breaks. Stimulates the branch migration of RecA-mediated strand transfer reactions, allowing the 3' invading strand to extend heteroduplex DNA faster. Binds ssDNA in the presence of ADP but not other nucleotides, has ATPase activity that is stimulated by ssDNA and various branched DNA structures, but inhibited by SSB. Does not have RecA's homology-searching function. The protein is DNA repair protein RadA of Brucella abortus (strain 2308).